The chain runs to 131 residues: Large ribosomal subunit protein bL17 (131 aa).

It belongs to the bacterial ribosomal protein bL17 family. As to quaternary structure, part of the 50S ribosomal subunit. Contacts protein L32.

This is Large ribosomal subunit protein bL17 from Bordetella parapertussis (strain 12822 / ATCC BAA-587 / NCTC 13253).